The primary structure comprises 403 residues: MDSESVVAADGADCAIANGEVTMEGDSSNGNGGTSENLECCSTQHPMEASEGTQNEQVDDSKQMRGQKVQGRVKHEKTSGGKNIPSVLVKKKKDGKVVASNGSVAPNVKPVKSPKSKSLNGREAHVTKHGNHDSLPAEGTRDKPKLRETRKQVNDTSEDDTQYPKEDDGKPRRASALPNYGFSFRCDQRAEKRREFYSKLEEKIHAKEEEKNTVQAKSKETQEAELKMLRKSLNFKATPMPTFYQEPQLPKTELKKIAITRPKSPKLGRKKTNSRADSEEAITIQTPRFGRLSLDEKTPKDNPVVEGSVPGETKKPPVRKSLPRLPSEKTNLSNGKVAPAKAVTASTKAKSERKKPDKDVDDLSQSSPVDDNADPEDSQEQAPRVNEDRNESHMVVEVVAVEP.

2 disordered regions span residues 1 to 179 (MDSE…ALPN) and 254 to 403 (LKKI…AVEP). A compositionally biased stretch (polar residues) spans 25–56 (GDSSNGNGGTSENLECCSTQHPMEASEGTQNE). Residues 103-118 (SVAPNVKPVKSPKSKS) show a composition bias toward low complexity. A Phosphoserine modification is found at serine 113. 3 stretches are compositionally biased toward basic and acidic residues: residues 120–132 (NGRE…HGNH), 139–153 (GTRD…RKQV), and 162–171 (QYPKEDDGKP). Basic residues predominate over residues 263–273 (KSPKLGRKKTN). The span at 336–348 (KVAPAKAVTASTK) shows a compositional bias: low complexity. The segment covering 385–394 (VNEDRNESHM) has biased composition (basic and acidic residues).

This sequence belongs to the TPX2 family. Expressed in seedlings.

It localises to the cytoplasm. The protein resides in the cytoskeleton. Its function is as follows. Microtubule-associated protein (MAP) that regulates the orientation of interphase cortical microtubules. The protein is Protein WVD2-like 6 of Arabidopsis thaliana (Mouse-ear cress).